We begin with the raw amino-acid sequence, 464 residues long: MVDSKRMDSGSKDMINDLPDALLCHVLSYLTTKEAASTSLLSRRWRYLLAFVPNLEFDDSAYLHRDKRVKNPLHEKGLVGFVLTVDDKRKKLSTSFPDFVDRILDLQGNSPLDKFSLKMVDDHDPVDPDCVAPWIHKVLVRGVSDLHLVIDMNEWTSLPAKIFLTETLVKLTLKIRDGPPIDVKHVHLPKLKTLHLESVMFDEEDIGFSKLLSGCPELEELVLHHIWSCVWTSCSVSVATLKRLTFCCNNMKFCGMHEENPNNVSFDTPNLVYLEYAEVIANNYPKVNFDSLVEAKIDIWMTNDQLDEVRIRDIYEKNVMVGNATDLIVGIRNVRVLCLSADTLEVLTYCCKQIPIFNNLTHVTIQSTPKVGWKSLLKLLKNSPKLQTLVFQGLLHRDTKEEGVAIIKIEKQIEKVKHFLETMPHLEQLVLHYDSSIDGDMKQLLMLSSLASPKCKVQLIPLVT.

In terms of domain architecture, F-box spans Lys12 to Ser60. LRR repeat units lie at residues Thr172 to Ser198, Met200 to His225, Ser233 to Glu258, Val336 to Ser367, Thr368 to Gly393, and Lys408 to Tyr433.

This Arabidopsis thaliana (Mouse-ear cress) protein is Putative F-box/LRR-repeat protein At3g59160.